A 620-amino-acid polypeptide reads, in one-letter code: MTTELLDRILSPADLRQLDRRELKRLADELRGFVLESVSRTGGHLSSNLGTVELSLALHYVFDTPHDRIVWDVGHQSYPHKILTGRREGMAHLRQQGGISGFPKRSESEYDAFGTAHSSTSISAALGMAVASRNAGVQRQHIAVIGDGAMSAGMAFEAMNNAGVTPNINLLVVLNDNDMSISPPVGALNRYLARLMSGQFYAAAKNVGRAVLQHVPPVLELARRLEEHAKGMVTPATLFEEFGFNYVGPIDGHDLDALVPTLQNLRALPGLQFLHVVTRKGQGYKLAEADPVLYHGPGKFDPAVGIQQAKAPARKTFTQVFGQWLCDMAERDERLVGITPAMREGSGLVEFEQRFPQRYFDVGIAEQHAVTFAAGLACEGQKPVVAIYSTFLQRGYDQLVHDVALQNLDVTFALDRAGLVGADGATHAGNYDIAFLRCVPNMVVAAPSDESEARLLLSTCYEHPGPASVRYPRGAGCGAAVGEGLATVPLGKGLVRREGRRIAILGFGTLVQAALGAAGQIDATVADMRFVKPLDRELVLELAARHDALVTVEEAAIMGGAGSAVLETLAEAGVTLPVLQLGLPDAFIDHGDQAALLAGLGLDAAGIERAIRARFGALLA.

Thiamine diphosphate is bound by residues histidine 75 and 116 to 118; that span reads AHS. Aspartate 147 lines the Mg(2+) pocket. Thiamine diphosphate-binding positions include 148–149, asparagine 177, tyrosine 284, and glutamate 366; that span reads GA. Position 177 (asparagine 177) interacts with Mg(2+).

The protein belongs to the transketolase family. DXPS subfamily. As to quaternary structure, homodimer. It depends on Mg(2+) as a cofactor. The cofactor is thiamine diphosphate.

The catalysed reaction is D-glyceraldehyde 3-phosphate + pyruvate + H(+) = 1-deoxy-D-xylulose 5-phosphate + CO2. It functions in the pathway metabolic intermediate biosynthesis; 1-deoxy-D-xylulose 5-phosphate biosynthesis; 1-deoxy-D-xylulose 5-phosphate from D-glyceraldehyde 3-phosphate and pyruvate: step 1/1. Catalyzes the acyloin condensation reaction between C atoms 2 and 3 of pyruvate and glyceraldehyde 3-phosphate to yield 1-deoxy-D-xylulose-5-phosphate (DXP). The sequence is that of 1-deoxy-D-xylulose-5-phosphate synthase from Bordetella bronchiseptica (strain ATCC BAA-588 / NCTC 13252 / RB50) (Alcaligenes bronchisepticus).